The primary structure comprises 624 residues: Methyl-accepting chemotaxis protein McpG (624 aa).

The helical transmembrane segment at 11-31 (ILLAASLIVILAFSLFTLYND) threads the bilayer. The 219-residue stretch at 36–254 (NAIREDLENY…GLPSANWYIG (219 aa)) folds into the Cache domain. Residues 272–292 (SAVIATVVAVVIIIGLLGLLI) traverse the membrane as a helical segment. The 55-residue stretch at 293–347 (RVLMQPLHTMTRAMEDIAEGEGDLTKRLHIHSHDEFGVLGNAFNRFVERIHSSIR) folds into the HAMP domain. One can recognise a Methyl-accepting transducer domain in the interval 352–588 (ATEQVNEVAL…AINMDINEIN (237 aa)).

Belongs to the methyl-accepting chemotaxis (MCP) protein family.

The protein resides in the cell membrane. Chemotactic-signal transducers respond to changes in the concentration of attractants and repellents in the environment, transduce a signal from the outside to the inside of the cell, and facilitate sensory adaptation through the variation of the level of methylation. McpG is a specific gamma-aminobutyric acid (GABA) chemoreceptor that recognizes GABA over a wide range of environmental conditions. Contributes to attraction to and colonization of plant roots. The chain is Methyl-accepting chemotaxis protein McpG from Pseudomonas putida (strain ATCC 47054 / DSM 6125 / CFBP 8728 / NCIMB 11950 / KT2440).